The chain runs to 84 residues: Large ribosomal subunit protein bL31B (84 aa).

It belongs to the bacterial ribosomal protein bL31 family. Type B subfamily. Part of the 50S ribosomal subunit.

The polypeptide is Large ribosomal subunit protein bL31B (Streptomyces griseus subsp. griseus (strain JCM 4626 / CBS 651.72 / NBRC 13350 / KCC S-0626 / ISP 5235)).